The primary structure comprises 140 residues: Nucleoside diphosphate kinase (140 aa).

ATP-binding residues include Lys11, Phe59, Arg87, Thr93, Arg104, and Asn114. His117 serves as the catalytic Pros-phosphohistidine intermediate.

This sequence belongs to the NDK family. As to quaternary structure, homotetramer. The cofactor is Mg(2+).

Its subcellular location is the cytoplasm. It carries out the reaction a 2'-deoxyribonucleoside 5'-diphosphate + ATP = a 2'-deoxyribonucleoside 5'-triphosphate + ADP. It catalyses the reaction a ribonucleoside 5'-diphosphate + ATP = a ribonucleoside 5'-triphosphate + ADP. Major role in the synthesis of nucleoside triphosphates other than ATP. The ATP gamma phosphate is transferred to the NDP beta phosphate via a ping-pong mechanism, using a phosphorylated active-site intermediate. The sequence is that of Nucleoside diphosphate kinase from Erythrobacter litoralis (strain HTCC2594).